The sequence spans 186 residues: TATA-box-binding protein 2 (186 aa).

2 tandem repeats follow at residues Ile-10–Leu-86 and Val-101–Ile-179. Residues Lys-53 and Lys-63 each participate in a glycyl lysine isopeptide (Lys-Gly) (interchain with G-Cter in SAMP2) cross-link.

It belongs to the TBP family.

In terms of biological role, general factor that plays a role in the activation of archaeal genes transcribed by RNA polymerase. Binds specifically to the TATA box promoter element which lies close to the position of transcription initiation. In Haloferax volcanii (strain ATCC 29605 / DSM 3757 / JCM 8879 / NBRC 14742 / NCIMB 2012 / VKM B-1768 / DS2) (Halobacterium volcanii), this protein is TATA-box-binding protein 2 (tbp2).